The following is a 460-amino-acid chain: Proline--tRNA ligase (460 aa).

The protein belongs to the class-II aminoacyl-tRNA synthetase family. ProS type 3 subfamily. In terms of assembly, homodimer.

The protein localises to the cytoplasm. It carries out the reaction tRNA(Pro) + L-proline + ATP = L-prolyl-tRNA(Pro) + AMP + diphosphate. Its function is as follows. Catalyzes the attachment of proline to tRNA(Pro) in a two-step reaction: proline is first activated by ATP to form Pro-AMP and then transferred to the acceptor end of tRNA(Pro). This Methanococcus maripaludis (strain C5 / ATCC BAA-1333) protein is Proline--tRNA ligase.